Reading from the N-terminus, the 155-residue chain is S-ribosylhomocysteine lyase (155 aa).

Fe cation-binding residues include H58, H62, and C125.

Belongs to the LuxS family. As to quaternary structure, homodimer. Requires Fe cation as cofactor.

It carries out the reaction S-(5-deoxy-D-ribos-5-yl)-L-homocysteine = (S)-4,5-dihydroxypentane-2,3-dione + L-homocysteine. Its function is as follows. Involved in the synthesis of autoinducer 2 (AI-2) which is secreted by bacteria and is used to communicate both the cell density and the metabolic potential of the environment. The regulation of gene expression in response to changes in cell density is called quorum sensing. Catalyzes the transformation of S-ribosylhomocysteine (RHC) to homocysteine (HC) and 4,5-dihydroxy-2,3-pentadione (DPD). This Helicobacter pylori (strain Shi470) protein is S-ribosylhomocysteine lyase.